The following is a 91-amino-acid chain: DNA-binding protein HU (91 aa).

The protein belongs to the bacterial histone-like protein family.

In terms of biological role, histone-like DNA-binding protein which is capable of wrapping DNA to stabilize it, and thus to prevent its denaturation under extreme environmental conditions. Also seems to act as a fortuitous virulence factor in delayed sequelae by binding to heparan sulfate-proteoglycans in the extracellular matrix of target organs and acting as a nidus for in situ immune complex formation. This Streptococcus mutans serotype c (strain ATCC 700610 / UA159) protein is DNA-binding protein HU (hup).